Here is a 118-residue protein sequence, read N- to C-terminus: Large ribosomal subunit protein bL20 (118 aa).

The protein belongs to the bacterial ribosomal protein bL20 family.

Binds directly to 23S ribosomal RNA and is necessary for the in vitro assembly process of the 50S ribosomal subunit. It is not involved in the protein synthesizing functions of that subunit. In Thermus thermophilus (strain ATCC BAA-163 / DSM 7039 / HB27), this protein is Large ribosomal subunit protein bL20.